The chain runs to 583 residues: Probable cysteine--tRNA ligase, mitochondrial (583 aa).

Cys82 serves as a coordination point for Zn(2+). Gly83 serves as a coordination point for L-cysteine. Positions Pro84–His94 match the 'HIGH' region motif. Thr123 lines the L-cysteine pocket. The short motif at Lys128–Asn131 is the 'KIIK' region element. Zn(2+) is bound by residues Cys271, His296, and Glu300. Position 296 (His296) interacts with L-cysteine. The short motif at Lys337 to Ser341 is the 'KMSKS' region element. Lys340 provides a ligand contact to ATP.

Belongs to the class-I aminoacyl-tRNA synthetase family. The cofactor is Zn(2+).

Its subcellular location is the mitochondrion. The catalysed reaction is tRNA(Cys) + L-cysteine + ATP = L-cysteinyl-tRNA(Cys) + AMP + diphosphate. Its function is as follows. Mitochondrial cysteine-specific aminoacyl-tRNA synthetase that catalyzes the ATP-dependent ligation of cysteine to tRNA(Cys). In terms of biological role, in addition to its role as an aminoacyl-tRNA synthetase, has also cysteine persulfide synthase activity. Produces reactive persulfide species such as cysteine persulfide (CysSSH) from substrate cysteine and mediate direct incorporation of CysSSH into proteins during translations, resulting in protein persulfides and polysulfides. CysSSHs behave as potent antioxidants and cellular protectants. This Dictyostelium discoideum (Social amoeba) protein is Probable cysteine--tRNA ligase, mitochondrial (mcysS).